A 123-amino-acid chain; its full sequence is Protein Wnt-3b (123 aa).

Ser-1 carries O-palmitoleoyl serine; by PORCN lipidation. An intrachain disulfide couples Cys-89 to Cys-104. N-linked (GlcNAc...) asparagine glycosylation occurs at Asn-90.

It belongs to the Wnt family. In terms of processing, palmitoleoylation is required for efficient binding to frizzled receptors. Depalmitoleoylation leads to Wnt signaling pathway inhibition.

The protein localises to the secreted. It is found in the extracellular space. Its subcellular location is the extracellular matrix. Its function is as follows. Ligand for members of the frizzled family of seven transmembrane receptors. Probable developmental protein. May be a signaling molecule which affects the development of discrete regions of tissues. Is likely to signal over only few cell diameters. The polypeptide is Protein Wnt-3b (WNT-3B) (Alopias vulpinus (Common thresher shark)).